A 197-amino-acid chain; its full sequence is Auxin-responsive protein IAA19 (197 aa).

Residues 13–17 carry the EAR-like (transcriptional repression) motif; that stretch reads LRLGL. The segment covering 35–47 has biased composition (polar residues); that stretch reads MNMTSSGSNSDQC. The interval 35–67 is disordered; the sequence is MNMTSSGSNSDQCESGVVSSGGDAEKVNDSPAA. A PB1 domain is found at 96–184; the sequence is LGYVKVSMDG…KRLRIMKRSD (89 aa).

This sequence belongs to the Aux/IAA family. Homodimers and heterodimers. Interacts with the auxin response factor ARF7.

Its subcellular location is the nucleus. Its function is as follows. Aux/IAA proteins are short-lived transcriptional factors that function as repressors of early auxin response genes at low auxin concentrations. Repression is thought to result from the interaction with auxin response factors (ARFs), proteins that bind to the auxin-responsive promoter element (AuxRE). Formation of heterodimers with ARF proteins may alter their ability to modulate early auxin response genes expression. This chain is Auxin-responsive protein IAA19 (IAA19), found in Arabidopsis thaliana (Mouse-ear cress).